Consider the following 398-residue polypeptide: Succinate--CoA ligase [ADP-forming] subunit beta (398 aa).

The ATP-grasp domain occupies 9–254 (KRLLHTYGAP…LTEEDPKEIE (246 aa)). ATP contacts are provided by residues Lys46, 53-55 (GRG), Glu109, Ala112, and Glu117. 2 residues coordinate Mg(2+): Asn209 and Asp223. Substrate-binding positions include Asn274 and 331–333 (GIM).

This sequence belongs to the succinate/malate CoA ligase beta subunit family. Heterotetramer of two alpha and two beta subunits. Mg(2+) is required as a cofactor.

It carries out the reaction succinate + ATP + CoA = succinyl-CoA + ADP + phosphate. The enzyme catalyses GTP + succinate + CoA = succinyl-CoA + GDP + phosphate. Its pathway is carbohydrate metabolism; tricarboxylic acid cycle; succinate from succinyl-CoA (ligase route): step 1/1. Its function is as follows. Succinyl-CoA synthetase functions in the citric acid cycle (TCA), coupling the hydrolysis of succinyl-CoA to the synthesis of either ATP or GTP and thus represents the only step of substrate-level phosphorylation in the TCA. The beta subunit provides nucleotide specificity of the enzyme and binds the substrate succinate, while the binding sites for coenzyme A and phosphate are found in the alpha subunit. This is Succinate--CoA ligase [ADP-forming] subunit beta from Brucella abortus (strain S19).